The sequence spans 368 residues: F-box only protein 28 (368 aa).

The segment covering 1–11 (MAAAAEERMAE) has biased composition (basic and acidic residues). The disordered stretch occupies residues 1–56 (MAAAAEERMAEEGGGGQGDGGSSLASGSTQRQPPPPAPQHPQPGSQALPAPALAPD). A compositionally biased stretch (gly residues) spans 12–21 (EGGGGQGDGG). Residues 22–31 (SSLASGSTQR) show a composition bias toward low complexity. The span at 32-41 (QPPPPAPQHP) shows a compositional bias: pro residues. Residues 42-56 (QPGSQALPAPALAPD) show a composition bias toward low complexity. Residues 61–109 (NNTLVALPIVAIENILSFMSYDEISQLRLVCKRMDLVCQRMLNQGFLKV) enclose the F-box domain. Phosphoserine is present on residues serine 235 and serine 242. Threonine 270 bears the Phosphothreonine mark. The interval 328–368 (MESAVGNSSGSGQNEESPRKRKKATEAIDSLRKSKRLRNRK) is disordered. Low complexity predominate over residues 333–342 (GNSSGSGQNE). Serine 344 carries the phosphoserine modification.

As to quaternary structure, part of a SCF (SKP1-cullin-F-box) protein ligase complex.

It localises to the chromosome. The protein localises to the centromere. The protein resides in the kinetochore. In terms of biological role, probably recognizes and binds to some phosphorylated proteins and promotes their ubiquitination and degradation. The sequence is that of F-box only protein 28 (FBXO28) from Homo sapiens (Human).